The sequence spans 479 residues: Galactosylgalactosylxylosylprotein 3-beta-glucuronosyltransferase P (479 aa).

The Cytoplasmic portion of the chain corresponds to 1 to 34 (MKGGNYTSLGTCSGINVSGNVAGTRKMSLGKSIK). The helical; Signal-anchor for type II membrane protein transmembrane segment at 35-50 (MYLTIFILTTCIYMAL) threads the bilayer. Topologically, residues 51–479 (YQYHISREPF…EHIDRLLVRP (429 aa)) are lumenal. N-linked (GlcNAc...) asparagine glycans are attached at residues N90, N97, N98, and N271. The span at 94–120 (NTNNNSTTTSTTTTTAPTTPTTTTTTT) shows a compositional bias: low complexity. The segment at 94 to 122 (NTNNNSTTTSTTTTTAPTTPTTTTTTTVG) is disordered. Position 335 (D335) interacts with Mn(2+). The Proton acceptor role is filled by E418. The N-linked (GlcNAc...) asparagine glycan is linked to N460.

This sequence belongs to the glycosyltransferase 43 family. Requires Mn(2+) as cofactor.

It is found in the golgi apparatus membrane. The catalysed reaction is 3-O-(beta-D-galactosyl-(1-&gt;3)-beta-D-galactosyl-(1-&gt;4)-beta-D-xylosyl)-L-seryl-[protein] + UDP-alpha-D-glucuronate = 3-O-(beta-D-GlcA-(1-&gt;3)-beta-D-Gal-(1-&gt;3)-beta-D-Gal-(1-&gt;4)-beta-D-Xyl)-L-seryl-[protein] + UDP + H(+). Its pathway is protein modification; protein glycosylation. In terms of biological role, involved in the biosynthesis of L2/HNK-1 carbohydrate epitope on both glycolipids and glycoproteins. Enzyme has a broad specificity. The chain is Galactosylgalactosylxylosylprotein 3-beta-glucuronosyltransferase P (GlcAT-P) from Drosophila melanogaster (Fruit fly).